The following is a 446-amino-acid chain: Na(+)-translocating NADH-quinone reductase subunit A (446 aa).

This sequence belongs to the NqrA family. As to quaternary structure, composed of six subunits; NqrA, NqrB, NqrC, NqrD, NqrE and NqrF.

It carries out the reaction a ubiquinone + n Na(+)(in) + NADH + H(+) = a ubiquinol + n Na(+)(out) + NAD(+). In terms of biological role, NQR complex catalyzes the reduction of ubiquinone-1 to ubiquinol by two successive reactions, coupled with the transport of Na(+) ions from the cytoplasm to the periplasm. NqrA to NqrE are probably involved in the second step, the conversion of ubisemiquinone to ubiquinol. The sequence is that of Na(+)-translocating NADH-quinone reductase subunit A from Aliivibrio salmonicida (strain LFI1238) (Vibrio salmonicida (strain LFI1238)).